Consider the following 889-residue polypeptide: DNA gyrase subunit A (889 aa).

One can recognise a Topo IIA-type catalytic domain in the interval 35–501 (LPDVRDGLKP…GFEDLEDEDL (467 aa)). Y123 acts as the O-(5'-phospho-DNA)-tyrosine intermediate in catalysis. Positions 528–534 (QNRGGRG) match the GyrA-box motif. The disordered stretch occupies residues 810–889 (VKEDAEDETN…IQQSSDEDEE (80 aa)). Over residues 813–823 (DAEDETNEDEQ) the composition is skewed to acidic residues. The span at 863-875 (DGRIEVRQDFMDR) shows a compositional bias: basic and acidic residues. The span at 876 to 889 (VEEDIQQSSDEDEE) shows a compositional bias: acidic residues.

The protein belongs to the type II topoisomerase GyrA/ParC subunit family. Heterotetramer, composed of two GyrA and two GyrB chains. In the heterotetramer, GyrA contains the active site tyrosine that forms a transient covalent intermediate with DNA, while GyrB binds cofactors and catalyzes ATP hydrolysis.

Its subcellular location is the cytoplasm. The enzyme catalyses ATP-dependent breakage, passage and rejoining of double-stranded DNA.. A type II topoisomerase that negatively supercoils closed circular double-stranded (ds) DNA in an ATP-dependent manner to modulate DNA topology and maintain chromosomes in an underwound state. Negative supercoiling favors strand separation, and DNA replication, transcription, recombination and repair, all of which involve strand separation. Also able to catalyze the interconversion of other topological isomers of dsDNA rings, including catenanes and knotted rings. Type II topoisomerases break and join 2 DNA strands simultaneously in an ATP-dependent manner. This Staphylococcus aureus (strain N315) protein is DNA gyrase subunit A.